The following is a 443-amino-acid chain: Xaa-Pro dipeptidase (443 aa).

Mn(2+) is bound by residues D244, D255, H336, E381, and E420.

It belongs to the peptidase M24B family. Bacterial-type prolidase subfamily. It depends on Mn(2+) as a cofactor.

It catalyses the reaction Xaa-L-Pro dipeptide + H2O = an L-alpha-amino acid + L-proline. Its function is as follows. Splits dipeptides with a prolyl residue in the C-terminal position. This is Xaa-Pro dipeptidase from Stenotrophomonas maltophilia (strain K279a).